The chain runs to 458 residues: ATP synthase subunit beta (458 aa).

G148 to T155 contacts ATP.

It belongs to the ATPase alpha/beta chains family. F-type ATPases have 2 components, CF(1) - the catalytic core - and CF(0) - the membrane proton channel. CF(1) has five subunits: alpha(3), beta(3), gamma(1), delta(1), epsilon(1). CF(0) has three main subunits: a(1), b(2) and c(9-12). The alpha and beta chains form an alternating ring which encloses part of the gamma chain. CF(1) is attached to CF(0) by a central stalk formed by the gamma and epsilon chains, while a peripheral stalk is formed by the delta and b chains.

The protein resides in the cell inner membrane. The catalysed reaction is ATP + H2O + 4 H(+)(in) = ADP + phosphate + 5 H(+)(out). Produces ATP from ADP in the presence of a proton gradient across the membrane. The catalytic sites are hosted primarily by the beta subunits. In Pseudomonas putida (strain ATCC 700007 / DSM 6899 / JCM 31910 / BCRC 17059 / LMG 24140 / F1), this protein is ATP synthase subunit beta.